We begin with the raw amino-acid sequence, 27 residues long: Alpha-benincasin (27 aa).

In terms of biological role, has weak antifungal activity toward C.comatus and P.piricola but not toward M.arachidicola. Inhibits cell-free translation in rabbit reticulocyte lysate system. The protein is Alpha-benincasin of Benincasa hispida (Wax gourd).